The primary structure comprises 215 residues: Cytochrome b6 (215 aa).

A helical membrane pass occupies residues 32–52 (IFYCLGGITLTCFLIQVATGF). Position 35 (Cys35) interacts with heme c. Residues His86 and His100 each coordinate heme b. 3 helical membrane passes run 90 to 110 (ASMM…TGGF), 116 to 136 (LTWV…VTGY), and 186 to 206 (LHTF…FLMI). Heme b is bound by residues His187 and His202.

The protein belongs to the cytochrome b family. PetB subfamily. The 4 large subunits of the cytochrome b6-f complex are cytochrome b6, subunit IV (17 kDa polypeptide, PetD), cytochrome f and the Rieske protein, while the 4 small subunits are PetG, PetL, PetM and PetN. The complex functions as a dimer. Heme b serves as cofactor. The cofactor is heme c.

It localises to the plastid. Its subcellular location is the chloroplast thylakoid membrane. Its function is as follows. Component of the cytochrome b6-f complex, which mediates electron transfer between photosystem II (PSII) and photosystem I (PSI), cyclic electron flow around PSI, and state transitions. The sequence is that of Cytochrome b6 from Spirogyra maxima (Green alga).